Consider the following 230-residue polypeptide: 7-cyano-7-deazaguanine synthase (230 aa).

8–18 serves as a coordination point for ATP; the sequence is FSGGQDSTTCL. Residues Cys187, Cys196, Cys199, and Cys202 each coordinate Zn(2+).

It belongs to the QueC family. It depends on Zn(2+) as a cofactor.

It catalyses the reaction 7-carboxy-7-deazaguanine + NH4(+) + ATP = 7-cyano-7-deazaguanine + ADP + phosphate + H2O + H(+). The protein operates within purine metabolism; 7-cyano-7-deazaguanine biosynthesis. In terms of biological role, catalyzes the ATP-dependent conversion of 7-carboxy-7-deazaguanine (CDG) to 7-cyano-7-deazaguanine (preQ(0)). The protein is 7-cyano-7-deazaguanine synthase of Shewanella amazonensis (strain ATCC BAA-1098 / SB2B).